We begin with the raw amino-acid sequence, 154 residues long: Transcriptional repressor NrdR (154 aa).

A zinc finger lies at 3 to 34; the sequence is CPHCHKNGSRVVDSRPSEDGSFIRRRRECIHC. Residues 49 to 139 form the ATP-cone domain; sequence LLVIKKDGTR…VYRQFKDVDA (91 aa).

The protein belongs to the NrdR family. Zn(2+) is required as a cofactor.

Functionally, negatively regulates transcription of bacterial ribonucleotide reductase nrd genes and operons by binding to NrdR-boxes. The sequence is that of Transcriptional repressor NrdR from Limosilactobacillus reuteri (strain DSM 20016) (Lactobacillus reuteri).